Here is a 332-residue protein sequence, read N- to C-terminus: Probable class II chitinase ARB_00204 (332 aa).

Positions 1–18 are cleaved as a signal peptide; sequence MKTPFTILAALTVATTLA. The GH18 domain occupies 19–331; that stretch reads DVPDEWDIIE…NPHRKYLDSF (313 aa). The Proton donor role is filled by Glu118. Residue Asn245 is glycosylated (N-linked (GlcNAc...) asparagine).

This sequence belongs to the glycosyl hydrolase 18 family. Chitinase class II subfamily.

The protein localises to the secreted. It carries out the reaction Random endo-hydrolysis of N-acetyl-beta-D-glucosaminide (1-&gt;4)-beta-linkages in chitin and chitodextrins.. Degrades chitin and chitotriose. The chain is Probable class II chitinase ARB_00204 from Arthroderma benhamiae (strain ATCC MYA-4681 / CBS 112371) (Trichophyton mentagrophytes).